Consider the following 474-residue polypeptide: Lysosomal protective protein (474 aa).

Positions 1–23 are cleaved as a signal peptide; sequence MPGTALSPLLLLLLLSWASRNEA. Disulfide bonds link Cys83-Cys356, Cys235-Cys251, Cys236-Cys241, and Cys276-Cys325. N-linked (GlcNAc...) (high mannose) asparagine glycosylation is present at Asn140. Ser173 is an active-site residue. A glycan (N-linked (GlcNAc...) (high mannose) asparagine) is linked at Asn327. Active-site residues include Asp394 and His451.

Belongs to the peptidase S10 family. Heterodimer of a 32 kDa chain and a 20 kDa chain; disulfide-linked.

Its subcellular location is the lysosome. The enzyme catalyses Release of a C-terminal amino acid with broad specificity.. Protective protein appears to be essential for both the activity of beta-galactosidase and neuraminidase, it associates with these enzymes and exerts a protective function necessary for their stability and activity. This protein is also a carboxypeptidase and can deamidate tachykinins. This is Lysosomal protective protein (Ctsa) from Mus musculus (Mouse).